A 121-amino-acid chain; its full sequence is Small ribosomal subunit protein uS13 (121 aa).

Positions 91–121 (HRRGLPVRGQNTKNNARTRKGKKASMAGKKK) are disordered. Residues 106-121 (ARTRKGKKASMAGKKK) show a composition bias toward basic residues.

It belongs to the universal ribosomal protein uS13 family. As to quaternary structure, part of the 30S ribosomal subunit. Forms a loose heterodimer with protein S19. Forms two bridges to the 50S subunit in the 70S ribosome.

Located at the top of the head of the 30S subunit, it contacts several helices of the 16S rRNA. In the 70S ribosome it contacts the 23S rRNA (bridge B1a) and protein L5 of the 50S subunit (bridge B1b), connecting the 2 subunits; these bridges are implicated in subunit movement. Contacts the tRNAs in the A and P-sites. The sequence is that of Small ribosomal subunit protein uS13 from Lacticaseibacillus paracasei (strain ATCC 334 / BCRC 17002 / CCUG 31169 / CIP 107868 / KCTC 3260 / NRRL B-441) (Lactobacillus paracasei).